A 145-amino-acid chain; its full sequence is Transcription antitermination protein NusB (145 aa).

This sequence belongs to the NusB family.

Its function is as follows. Involved in transcription antitermination. Required for transcription of ribosomal RNA (rRNA) genes. Binds specifically to the boxA antiterminator sequence of the ribosomal RNA (rrn) operons. The protein is Transcription antitermination protein NusB of Ruminiclostridium cellulolyticum (strain ATCC 35319 / DSM 5812 / JCM 6584 / H10) (Clostridium cellulolyticum).